The following is a 504-amino-acid chain: Probable cytochrome P450 6a21 (504 aa).

Heme is bound at residue C449.

This sequence belongs to the cytochrome P450 family. It depends on heme as a cofactor.

It is found in the endoplasmic reticulum membrane. The protein localises to the microsome membrane. Functionally, may be involved in the metabolism of insect hormones and in the breakdown of synthetic insecticides. The chain is Probable cytochrome P450 6a21 (Cyp6a21) from Drosophila melanogaster (Fruit fly).